The following is a 135-amino-acid chain: Universal stress protein Aq_178 (135 aa).

This sequence belongs to the universal stress protein A family.

In Aquifex aeolicus (strain VF5), this protein is Universal stress protein Aq_178.